The sequence spans 859 residues: Leucine--tRNA ligase (859 aa).

The short motif at 42-52 (PYPSGRLHMGH) is the 'HIGH' region element. The short motif at 618–622 (KMSKS) is the 'KMSKS' region element. Lysine 621 serves as a coordination point for ATP.

The protein belongs to the class-I aminoacyl-tRNA synthetase family.

The protein resides in the cytoplasm. It catalyses the reaction tRNA(Leu) + L-leucine + ATP = L-leucyl-tRNA(Leu) + AMP + diphosphate. The sequence is that of Leucine--tRNA ligase from Shewanella sp. (strain MR-7).